Here is a 577-residue protein sequence, read N- to C-terminus: Serine/threonine-protein kinase AGC1-5 (577 aa).

The segment covering 1 to 12 (MDLASKKNTANV) has biased composition (polar residues). The disordered stretch occupies residues 1–151 (MDLASKKNTA…DYAYGDNLVG (151 aa)). The span at 44–55 (PHFDPKKMDPLV) shows a compositional bias: basic and acidic residues. Polar residues-rich tracts occupy residues 69–87 (TRGT…SSDG) and 110–120 (LTTSETYSPSA). Residues 185–509 (FRLLKRLGYG…ATEIKQHPFF (325 aa)) enclose the Protein kinase domain. ATP is bound by residues 191 to 199 (LGYGDIGSV) and Lys-214. Catalysis depends on Asp-310, which acts as the Proton acceptor. The AGC-kinase C-terminal domain occupies 510-577 (EGVNWALVRS…DTAYIDFEYF (68 aa)).

The protein belongs to the protein kinase superfamily. AGC Ser/Thr protein kinase family. In terms of assembly, interacts with PDPK1/PDK1. Post-translationally, autophosphorylated and phosphorylated by PDPK1/PDK1. In terms of tissue distribution, specifically expressed in pollen grains.

The enzyme catalyses L-seryl-[protein] + ATP = O-phospho-L-seryl-[protein] + ADP + H(+). It catalyses the reaction L-threonyl-[protein] + ATP = O-phospho-L-threonyl-[protein] + ADP + H(+). With respect to regulation, activated by PDPK1/PDK1. Its function is as follows. Functions redudantly with AGC1-7 as signaling component in the pollen tube. Required for polarized growth of pollen tubes. This Arabidopsis thaliana (Mouse-ear cress) protein is Serine/threonine-protein kinase AGC1-5.